A 613-amino-acid polypeptide reads, in one-letter code: MADGVFQGAIGIDLGTTYSCVATYESSVEIIANEQGNRVTPSFVAFTPEERLIGDAAKNQAALNPKNTVFDAKRLIGRRFDEESVQNDMKTWPFKVVDVDGAPVIEVEYLGENKQFSPQEISSMVLTKMKEIAEAKIGKKVEKAVITVPAYFNDAQRQATKDAGAISGLNVLRIINEPTAAAIAYGLGAGKSDKERHVLIFDLGGGTFDVSLLHIAGGVYTVKSTSGNTHLGGQDFDTNLLEHFKGEFKKKTGLDISNDARALRRLRTAAERAKRTLSSVTQTTVEVDSLFEGEDFEASLTRARFEDLNAALFKSTLEPVEQVLKDAKISKSQIDEVVLVGGSTRIPKVQKLLSDYFDGKQLEKSINPDEAVAYGAAVQGAILTGQSTSDETKDLLLLDVAPLSLGVGMQGDIFGVVVPRNTTVPTIKRRTFTTVGDNQTTVQFPVYQGERVNCKENTLLGEFDLKNIPPMPAGEPVLEAIFEVDANGILKVTAVEKSTGKSANITISNAVGRLSSEDIEKMVNQAEEFKAADEAFAKRHEAKQRLESYVASIEQTVTDPVLSSKLKRGSKTKIEAALADALSALQIEDGSAEEYRKAEVGLKRVVTKAMSSR.

The interval 1 to 391 (MADGVFQGAI…ILTGQSTSDE (391 aa)) is nucleotide binding domain (NBD). ATP-binding positions include 16-18 (TTY), Lys-73, 205-207 (GGT), 271-278 (ERAKRTLS), and Gly-342. The tract at residues 392–402 (TKDLLLLDVAP) is inter-domain linker. The segment at 403-613 (LSLGVGMQGD…RVVTKAMSSR (211 aa)) is substrate binding domain (SBD). The lid domain (SBDalpha) stretch occupies residues 516 to 612 (SEDIEKMVNQ…KRVVTKAMSS (97 aa)). The short motif at 574–582 (IEAALADAL) is the Nuclear export signal element.

It belongs to the heat shock protein 70 family. Ssb-type Hsp70 subfamily. Binds to ribosomes. Binds close to the ribosomal tunnel exit via contacts with both ribosomal proteins and rRNA. Directly interacts with nascent polypeptides. This interaction is dependent on the ribosome-associated complex (RAC). Interacts with SSE1. Interacts with FES1.

It localises to the cytoplasm. The catalysed reaction is ATP + H2O = ADP + phosphate + H(+). In terms of biological role, ribosome-bound, Hsp70-type chaperone that assists in the cotranslational folding of newly synthesized proteins in the cytosol. Stimulates folding by interacting with nascent chains, binding to short, largely hydrophobic sequences exposed by unfolded proteins, thereby stabilizing longer, more slowly translated, and aggregation-prone nascent polypeptides and domains that cannot fold stably until fully synthesized. The Hsp70-protein substrate interaction depends on ATP-binding and on allosteric regulation between the NBD and the SBD. The ATP-bound state is characterized by a fast exchange rate of substrate (low affinity state), while in the ADP-bound state exchange is much slower (high affinity state). During the Hsp70 cycle, the chaperone switches between the ATP-bound state (open conformation) and the ADP-bound state (closed conformation) by major conformational rearrangements involving mainly the lid domain. Ssb cooperates with a specific Hsp40/Hsp70 co-chaperone termed the ribosome-associated complex (RAC), which stimulates the ATPase activity of the ribosome-associated pool of Ssbs and switches it to the high affinity substrate binding state. Hsp110 chaperone SSE1 and FES1 act as nucleotide exchange factors that cause substrate release. The polypeptide is Ribosome-associated molecular chaperone SSB (SSB1) (Candida glabrata (strain ATCC 2001 / BCRC 20586 / JCM 3761 / NBRC 0622 / NRRL Y-65 / CBS 138) (Yeast)).